The following is a 178-amino-acid chain: ATP synthase subunit delta (178 aa).

This sequence belongs to the ATPase delta chain family. In terms of assembly, F-type ATPases have 2 components, F(1) - the catalytic core - and F(0) - the membrane proton channel. F(1) has five subunits: alpha(3), beta(3), gamma(1), delta(1), epsilon(1). F(0) has three main subunits: a(1), b(2) and c(10-14). The alpha and beta chains form an alternating ring which encloses part of the gamma chain. F(1) is attached to F(0) by a central stalk formed by the gamma and epsilon chains, while a peripheral stalk is formed by the delta and b chains.

It is found in the cell inner membrane. Functionally, f(1)F(0) ATP synthase produces ATP from ADP in the presence of a proton or sodium gradient. F-type ATPases consist of two structural domains, F(1) containing the extramembraneous catalytic core and F(0) containing the membrane proton channel, linked together by a central stalk and a peripheral stalk. During catalysis, ATP synthesis in the catalytic domain of F(1) is coupled via a rotary mechanism of the central stalk subunits to proton translocation. Its function is as follows. This protein is part of the stalk that links CF(0) to CF(1). It either transmits conformational changes from CF(0) to CF(1) or is implicated in proton conduction. The polypeptide is ATP synthase subunit delta (Alcanivorax borkumensis (strain ATCC 700651 / DSM 11573 / NCIMB 13689 / SK2)).